We begin with the raw amino-acid sequence, 215 residues long: MRLIILGAPGAGKGTQAEYLSSRFGIPHISTGDILRENVKNQTELGKKAKEYMDKGLLVPDEIVIEIVKNRLMQDDCKNGFLLDGFPRTIAQAEALEKVLADLGQKIDKVLNIEVPDEKILERMSGRRICKSCGASFHVVYRPPKKEGICDICGGQLYQREDDKEETVKKRLEVYHAQTQPLIEYYKNKGLLVTAVGQEEIADTTKEVLKALGVE.

10 to 15 (GAGKGT) contributes to the ATP binding site. The interval 30–59 (STGDILRENVKNQTELGKKAKEYMDKGLLV) is NMP. Residues Thr-31, Arg-36, 57–59 (LLV), 85–88 (GFPR), and Gln-92 each bind AMP. Positions 126 to 163 (GRRICKSCGASFHVVYRPPKKEGICDICGGQLYQREDD) are LID. Residue Arg-127 coordinates ATP. Zn(2+) is bound by residues Cys-130 and Cys-133. An ATP-binding site is contributed by 136 to 137 (SF). Residues Cys-150 and Cys-153 each contribute to the Zn(2+) site. AMP contacts are provided by Arg-160 and Arg-171. Residue Glu-199 coordinates ATP.

This sequence belongs to the adenylate kinase family. As to quaternary structure, monomer.

It is found in the cytoplasm. The catalysed reaction is AMP + ATP = 2 ADP. The protein operates within purine metabolism; AMP biosynthesis via salvage pathway; AMP from ADP: step 1/1. In terms of biological role, catalyzes the reversible transfer of the terminal phosphate group between ATP and AMP. Plays an important role in cellular energy homeostasis and in adenine nucleotide metabolism. In Caldicellulosiruptor saccharolyticus (strain ATCC 43494 / DSM 8903 / Tp8T 6331), this protein is Adenylate kinase.